The following is a 157-amino-acid chain: 2-C-methyl-D-erythritol 2,4-cyclodiphosphate synthase (157 aa).

A divalent metal cation is bound by residues aspartate 8 and histidine 10. Residues 8–10 and 34–35 each bind 4-CDP-2-C-methyl-D-erythritol 2-phosphate; these read DVH and HS. Residue histidine 42 participates in a divalent metal cation binding. 4-CDP-2-C-methyl-D-erythritol 2-phosphate is bound by residues 56 to 58, 61 to 65, 132 to 135, and phenylalanine 139; these read DIG, FPDTD, and TTEE.

It belongs to the IspF family. Homotrimer. The cofactor is a divalent metal cation.

The enzyme catalyses 4-CDP-2-C-methyl-D-erythritol 2-phosphate = 2-C-methyl-D-erythritol 2,4-cyclic diphosphate + CMP. It participates in isoprenoid biosynthesis; isopentenyl diphosphate biosynthesis via DXP pathway; isopentenyl diphosphate from 1-deoxy-D-xylulose 5-phosphate: step 4/6. Involved in the biosynthesis of isopentenyl diphosphate (IPP) and dimethylallyl diphosphate (DMAPP), two major building blocks of isoprenoid compounds. Catalyzes the conversion of 4-diphosphocytidyl-2-C-methyl-D-erythritol 2-phosphate (CDP-ME2P) to 2-C-methyl-D-erythritol 2,4-cyclodiphosphate (ME-CPP) with a corresponding release of cytidine 5-monophosphate (CMP). This chain is 2-C-methyl-D-erythritol 2,4-cyclodiphosphate synthase, found in Clostridium botulinum (strain Eklund 17B / Type B).